Reading from the N-terminus, the 425-residue chain is uncharacterized protein (425 aa).

The CHY-type zinc-finger motif lies at Lys135–Asn202. Residues Cys142, His144, Cys153, Cys156, Cys162, Cys165, His166, His172, Cys184, Cys187, Cys197, Cys200, Cys209, Cys212, His225, Cys226, Cys229, Cys232, His244, Cys245, Cys248, Cys251, His260, and Cys262 each contribute to the Zn(2+) site. A CTCHY-type zinc finger spans residues Met204–Asn270. An RING-type; atypical zinc finger spans residues Cys271–Tyr313.

This is an uncharacterized protein from Schizosaccharomyces pombe (strain 972 / ATCC 24843) (Fission yeast).